The primary structure comprises 400 residues: Phosphoglycerate kinase (400 aa).

Substrate-binding positions include Asp-23–Asn-25, Arg-38, His-61–Arg-64, Arg-120, and Arg-153. ATP-binding positions include Lys-203, Glu-325, and Gly-355–Thr-358.

This sequence belongs to the phosphoglycerate kinase family. As to quaternary structure, monomer.

It is found in the cytoplasm. The catalysed reaction is (2R)-3-phosphoglycerate + ATP = (2R)-3-phospho-glyceroyl phosphate + ADP. Its pathway is carbohydrate degradation; glycolysis; pyruvate from D-glyceraldehyde 3-phosphate: step 2/5. This is Phosphoglycerate kinase from Methylorubrum populi (strain ATCC BAA-705 / NCIMB 13946 / BJ001) (Methylobacterium populi).